A 397-amino-acid polypeptide reads, in one-letter code: MGNKKIVLAYSGGLDTSVAVKWLTDKGFDVIAACMDVGEGKDLNFIHDKALQVGAVESVVLDCKAEFAEIFVGAALKGNLMYENKYPLVSALSRPLIAKKLVKVAKEKGATAIAHGCTGKGNDQVRFEVAIHSLAPELEVIAPVREWHWAREEEIEYANQNGVPIPADLDNPYSIDMNLWGRAIEAGVLENPWNTCPEDAFFMTNSVEDAPNEPEFIEVEFKEGLPIALNGKIMELHEIIKEVNIIAGKHGVGRIDHIENRLVGIKSREFYECPAAITLLKAHKDLEDLTFVRELAHFKPVLENELANLIYNGLWFNPATKALIAYLDETQKVVNGIVRIKLYKGLATPIGRKSTNSLYSEKLATYTAADEFDQAAAVGFIKLWGLPTQVNAQVNLK.

Residue 9-17 (AYSGGLDTS) participates in ATP binding. Tyrosine 86 provides a ligand contact to L-citrulline. Glycine 116 lines the ATP pocket. Residues threonine 118, asparagine 122, and aspartate 123 each contribute to the L-aspartate site. L-citrulline is bound at residue asparagine 122. Arginine 126, serine 174, glutamate 259, and tyrosine 271 together coordinate L-citrulline.

This sequence belongs to the argininosuccinate synthase family. Type 1 subfamily. Homotetramer.

Its subcellular location is the cytoplasm. It catalyses the reaction L-citrulline + L-aspartate + ATP = 2-(N(omega)-L-arginino)succinate + AMP + diphosphate + H(+). The protein operates within amino-acid biosynthesis; L-arginine biosynthesis; L-arginine from L-ornithine and carbamoyl phosphate: step 2/3. The chain is Argininosuccinate synthase from Lactococcus lactis subsp. cremoris (strain MG1363).